The primary structure comprises 241 residues: 15,16-dihydrobiliverdin:ferredoxin oxidoreductase (241 aa).

This sequence belongs to the HY2 family.

It carries out the reaction 15,16-dihydrobiliverdin + oxidized 2[4Fe-4S]-[ferredoxin] = biliverdin IXalpha + reduced 2[4Fe-4S]-[ferredoxin] + 2 H(+). Catalyzes the two-electron reduction of biliverdin IX-alpha at the C15 methine bridge. This Prochlorococcus marinus (strain SARG / CCMP1375 / SS120) protein is 15,16-dihydrobiliverdin:ferredoxin oxidoreductase (pebA).